The following is a 130-amino-acid chain: Small ribosomal subunit protein uS8 (130 aa).

It belongs to the universal ribosomal protein uS8 family.

This is Small ribosomal subunit protein uS8 (RPS15A) from Paracentrotus lividus (Common sea urchin).